The following is a 651-amino-acid chain: Peptide-N(4)-(N-acetyl-beta-glucosaminyl)asparagine amidase (651 aa).

Residues 29-90 (EASRLLLTYA…EGETHMVFPK (62 aa)) enclose the PUB domain. Positions 246, 249, 279, and 282 each coordinate Zn(2+). Residue Cys305 is the Nucleophile of the active site. Active-site residues include His332 and Asp349. A PAW domain is found at 450–651 (EFGGRTSGSM…LEMIIKLADL (202 aa)).

The protein belongs to the transglutaminase-like superfamily. PNGase family. Requires Zn(2+) as cofactor.

The protein localises to the cytoplasm. The catalysed reaction is Hydrolysis of an N(4)-(acetyl-beta-D-glucosaminyl)asparagine residue in which the glucosamine residue may be further glycosylated, to yield a (substituted) N-acetyl-beta-D-glucosaminylamine and a peptide containing an aspartate residue.. Specifically deglycosylates the denatured form of N-linked glycoproteins in the cytoplasm and assists their proteasome-mediated degradation. Cleaves the beta-aspartyl-glucosamine (GlcNAc) of the glycan and the amide side chain of Asn, converting Asn to Asp. Prefers proteins containing high-mannose over those bearing complex type oligosaccharides. Can recognize misfolded proteins in the endoplasmic reticulum that are exported to the cytosol to be destroyed and deglycosylate them, while it has no activity toward native proteins. Deglycosylation is a prerequisite for subsequent proteasome-mediated degradation of some, but not all, misfolded glycoproteins. The polypeptide is Peptide-N(4)-(N-acetyl-beta-glucosaminyl)asparagine amidase (NGLY1) (Gallus gallus (Chicken)).